The following is a 452-amino-acid chain: COP9 signalosome complex subunit 11 (452 aa).

One can recognise a PCI domain in the interval 205–374 (FYIEDPKTMM…ISYSKRSIVD (170 aa)).

In terms of assembly, component of a COP9 signalosome-like (CSN) complex.

It is found in the cytoplasm. The protein resides in the nucleus. In terms of biological role, component of the COP9 signalosome (CSN) complex that acts as an regulator of the ubiquitin (Ubl) conjugation pathway by mediating the deneddylation of the cullin subunit of SCF-type E3 ubiquitin-protein ligase complexes The CSN complex is involved in the regulation of the mating pheromone response. PCI8 may also be involved in transcriptional and translational control. This is COP9 signalosome complex subunit 11 (PCI8) from Candida glabrata (strain ATCC 2001 / BCRC 20586 / JCM 3761 / NBRC 0622 / NRRL Y-65 / CBS 138) (Yeast).